The primary structure comprises 368 residues: Ceramide synthase hyl-1 (368 aa).

A run of 7 helical transmembrane segments spans residues 27–47, 92–112, 138–158, 165–185, 191–211, 225–245, and 275–295; these read FVDL…RILW, ILEC…GLYV, IWWY…GSTF, FWQL…SWTI, GTLI…GKLV, FVLF…FIVI, and LIVF…FIIL. The TLC domain occupies 90–303; the sequence is KKILECFWRF…ILRIAYRTST (214 aa). Residues 306 to 368 are disordered; sequence QAKDVRSDSD…ARHRRAPRKE (63 aa). Over residues 343–353 the composition is skewed to acidic residues; it reads TDDDDDEGEEE. Positions 357-368 are enriched in basic residues; it reads RKARHRRAPRKE.

Belongs to the sphingosine N-acyltransferase family.

The protein localises to the membrane. It carries out the reaction a very long-chain fatty acyl-CoA + a sphingoid base = an N-(very-long-chain fatty acyl)-sphingoid base + CoA + H(+). It catalyses the reaction 15-methylhexadecasphinganine + a fatty acyl-CoA = an N-acyl-15-methylhexadecasphinganine + CoA + H(+). The enzyme catalyses a fatty acyl-CoA + sphinganine = an N-acylsphinganine + CoA + H(+). The catalysed reaction is sphinganine + tetradecanoyl-CoA = N-(tetradecanoyl)-sphinganine + CoA + H(+). It carries out the reaction hexacosanoyl-CoA + sphinganine = N-hexacosanoylsphinganine + CoA + H(+). Its pathway is lipid metabolism; sphingolipid metabolism. In terms of biological role, catalyzes the acylation of sphingoid bases to form ceramides, which are key players in cell signaling events such as extending lifespan and enhancing stress resistance. C.elegans contain specific sphingoid bases, which are unique or different in structure compared to the sphingoid bases found in other animals. Two examples of these distinctive compounds are: 15-methylhexadecasphinganine and 15-methylhexadecasphing-4-enine. Exhibits substrate preference for fatty acyl-coA chains containing carbon chain length (C16-C18) and very long chains (24 carbons and more). This is Ceramide synthase hyl-1 (hyl-1) from Caenorhabditis elegans.